The primary structure comprises 343 residues: tRNA N6-adenosine threonylcarbamoyltransferase (343 aa).

Histidine 120 and histidine 124 together coordinate Fe cation. Substrate is bound by residues 142–146 (VVSGG), aspartate 175, glycine 188, aspartate 192, and asparagine 281. Fe cation is bound at residue aspartate 309.

This sequence belongs to the KAE1 / TsaD family. Requires Fe(2+) as cofactor.

It localises to the cytoplasm. It catalyses the reaction L-threonylcarbamoyladenylate + adenosine(37) in tRNA = N(6)-L-threonylcarbamoyladenosine(37) in tRNA + AMP + H(+). In terms of biological role, required for the formation of a threonylcarbamoyl group on adenosine at position 37 (t(6)A37) in tRNAs that read codons beginning with adenine. Is involved in the transfer of the threonylcarbamoyl moiety of threonylcarbamoyl-AMP (TC-AMP) to the N6 group of A37, together with TsaE and TsaB. TsaD likely plays a direct catalytic role in this reaction. This Halalkalibacterium halodurans (strain ATCC BAA-125 / DSM 18197 / FERM 7344 / JCM 9153 / C-125) (Bacillus halodurans) protein is tRNA N6-adenosine threonylcarbamoyltransferase.